We begin with the raw amino-acid sequence, 572 residues long: Acyl-coenzyme A synthetase ACSM2, mitochondrial (572 aa).

A mitochondrion-targeting transit peptide spans 1-46 (MHWLWKIPRLCTFWGTEMFHRTFHMNIKKLMPIQWGHQEVPAKFNF). Q139 is a binding site for CoA. Residues 221 to 229 (TSGTSGPPK), 359 to 364 (EIYGQT), D446, and R461 each bind ATP. T364 is a substrate binding site. 469–471 (SGY) provides a ligand contact to CoA. R472 lines the substrate pocket. CoA contacts are provided by residues R501, K532, and 540-542 (YPR). K557 contributes to the ATP binding site.

The protein belongs to the ATP-dependent AMP-binding enzyme family. In terms of assembly, monomer. Mg(2+) is required as a cofactor. Requires Mn(2+) as cofactor. Detected in kidney, in proximal tubules.

Its subcellular location is the mitochondrion. The catalysed reaction is a medium-chain fatty acid + ATP + CoA = a medium-chain fatty acyl-CoA + AMP + diphosphate. The enzyme catalyses benzoate + ATP + CoA = benzoyl-CoA + AMP + diphosphate. It catalyses the reaction hexanoate + ATP + CoA = hexanoyl-CoA + AMP + diphosphate. It carries out the reaction butanoate + ATP + CoA = butanoyl-CoA + AMP + diphosphate. The catalysed reaction is octanoate + ATP + CoA = octanoyl-CoA + AMP + diphosphate. The enzyme catalyses decanoate + ATP + CoA = decanoyl-CoA + AMP + diphosphate. Its function is as follows. Catalyzes the activation of fatty acids by CoA to produce an acyl-CoA, the first step in fatty acid metabolism. Capable of activating medium-chain fatty acids (e.g. butyric (C4) to decanoic (C10) acids), and certain carboxylate-containing xenobiotics, e.g. benzoate. This chain is Acyl-coenzyme A synthetase ACSM2, mitochondrial (Acsm2), found in Rattus norvegicus (Rat).